We begin with the raw amino-acid sequence, 378 residues long: Isobutylamine N-hydroxylase (378 aa).

In terms of assembly, exists in dimeric or trimeric form depending upon buffer conditions. It can form an isobutylamine N-hydroxylase two component enzyme system formed of a flavin reductase component (VlmR) and a monooxygenase component (VlmH).

The catalysed reaction is 2-methylpropan-1-amine + FADH2 + O2 = N-(2-methylpropyl)hydroxylamine + FAD + H2O + 2 H(+). It carries out the reaction 2-methylpropan-1-amine + FMNH2 + O2 = N-(2-methylpropyl)hydroxylamine + FMN + H2O + 2 H(+). Its activity is regulated as follows. Inhibited by 5',5'-dithio-bis(2-nitrobenzoic acid) (DTNB) and 4-(hydroxymercuri)benzoic acid (p-HMB). Its function is as follows. Involved in the biosynthesis of the azoxy antibiotic valanimycin, which has an antitumor activity. Catalyzes the oxidation of isobutylamine to isobutylhydroxylamine via the formation of a flavin 4a-hydroperoxide. Unlike other known N-hydroxylases, isobutylamine N-hydroxylase cannot carry out the reduction of the flavin cofactor and requires the NADPH-flavin oxidoreductase VlmR. Also able to oxidize propan-1-amine, butan-1-amine, butan-2-amine and benzylamine. It has a similar activity with either FMNH(2) or FADH(2). The sequence is that of Isobutylamine N-hydroxylase from Streptomyces viridifaciens.